The following is a 654-amino-acid chain: WD repeat-containing protein 70 (654 aa).

2 disordered regions span residues 1–26 and 43–175; these read MERSGPSEVTGSDASGPDPQLAVTMG and FEQT…DSHE. A compositionally biased stretch (basic and acidic residues) spans 45–78; the sequence is QTRRTAVERSRKTLEAREKEEEMNREKELRRQNE. Positions 99–111 are enriched in low complexity; that stretch reads RDTSSSESEQSSD. A compositionally biased stretch (acidic residues) spans 147–164; it reads NEEEEEAEEEEEEEEEEE. Residues 165 to 175 are compositionally biased toward basic and acidic residues; sequence NPVHKIPDSHE. WD repeat units lie at residues 180 to 219, 227 to 268, 281 to 321, 330 to 369, 376 to 415, 421 to 466, and 469 to 508; these read HGTKTVSALGLDPSGARLVTGGYDYDVKFWDFAGMDASFK, CECH…ECIK, GHTA…KQKS, GKKVIPTTCTYSRDGNLIAAACQNGSIQIWDRNLTVHPKF, DSGTDTSCVTFSYDGNVLASRGGDDSLKLWDIRQFNKPLF, PTMF…RVYE, and ITDASVVRCLWHPKLNQIMVGTGNGLAKVYYDPNKSQRGA. A Glycyl lysine isopeptide (Lys-Gly) (interchain with G-Cter in SUMO2) cross-link involves residue Lys-296. Lys-452 bears the N6-acetyllysine mark. Over residues 540–565 the composition is skewed to basic and acidic residues; the sequence is REPRQRSTRKQLEKDRLDPLKSHKPE. Residues 540 to 579 form a disordered region; sequence REPRQRSTRKQLEKDRLDPLKSHKPEPPVAGPGRGGRVGT. Thr-579 is modified (phosphothreonine). Residues Lys-590 and Lys-596 each participate in a glycyl lysine isopeptide (Lys-Gly) (interchain with G-Cter in SUMO2) cross-link. 2 positions are modified to phosphoserine: Ser-621 and Ser-638. Residues 630–654 are disordered; that stretch reads KTMFAQVESDDEEAKNEPEWKKRKI. A compositionally biased stretch (basic and acidic residues) spans 644–654; the sequence is KNEPEWKKRKI.

It belongs to the WD repeat GAD-1 family.

This Homo sapiens (Human) protein is WD repeat-containing protein 70 (WDR70).